The sequence spans 393 residues: Sialyltransferase-like protein 1 (393 aa).

The Cytoplasmic segment spans residues 1–8 (MKRPLRRP). Residues 9 to 27 (FAVLLFVVLCAAASFPSVL) traverse the membrane as a helical; Signal-anchor for type II membrane protein segment. Topologically, residues 28 to 393 (RRSVGPAPVL…IAVPPVVFYH (366 aa)) are lumenal. N-linked (GlcNAc...) asparagine glycosylation is found at Asn49, Asn212, and Asn258.

This sequence belongs to the glycosyltransferase 29 family. In terms of tissue distribution, expressed in leaves and stalks. Expressed at low levels in roots.

The protein resides in the golgi apparatus membrane. Its function is as follows. Possesses sialyltransferase-like activity in vitro. Transfers sialic acid to the oligosaccharide Gal-beta-1,3-GalNAc and to glycoproteins such as asialofetuin, alpha-1-acid glycoprotein (NeuAc-alpha-2,3-Gal-beta-1,3-GalNAc-) and andasialo-alpha-1-acid glycoprotein. The transferred sialic acid is linked to galactose of Gal-beta-1,3-GalNAc through alpha-2,6-linkage. This Oryza sativa subsp. japonica (Rice) protein is Sialyltransferase-like protein 1.